The chain runs to 777 residues: 1,4-alpha-glucan branching enzyme GlgB (777 aa).

Aspartate 408 serves as the catalytic Nucleophile. Glutamate 461 serves as the catalytic Proton donor.

Belongs to the glycosyl hydrolase 13 family. GlgB subfamily. Monomer.

It carries out the reaction Transfers a segment of a (1-&gt;4)-alpha-D-glucan chain to a primary hydroxy group in a similar glucan chain.. The protein operates within glycan biosynthesis; glycogen biosynthesis. Functionally, catalyzes the formation of the alpha-1,6-glucosidic linkages in glycogen by scission of a 1,4-alpha-linked oligosaccharide from growing alpha-1,4-glucan chains and the subsequent attachment of the oligosaccharide to the alpha-1,6 position. The protein is 1,4-alpha-glucan branching enzyme GlgB of Actinobacillus pleuropneumoniae serotype 3 (strain JL03).